The following is a 390-amino-acid chain: DNA polymerase IV (390 aa).

The UmuC domain maps to 6–187 (VMHVDLDAFF…LDISIMPGIG (182 aa)). Mg(2+) is bound by residues aspartate 10 and aspartate 105. Residue glutamate 106 is part of the active site.

The protein belongs to the DNA polymerase type-Y family. In terms of assembly, monomer. Mg(2+) serves as cofactor.

Its subcellular location is the cytoplasm. The enzyme catalyses DNA(n) + a 2'-deoxyribonucleoside 5'-triphosphate = DNA(n+1) + diphosphate. Poorly processive, error-prone DNA polymerase involved in untargeted mutagenesis. Copies undamaged DNA at stalled replication forks, which arise in vivo from mismatched or misaligned primer ends. These misaligned primers can be extended by PolIV. Exhibits no 3'-5' exonuclease (proofreading) activity. May be involved in translesional synthesis, in conjunction with the beta clamp from PolIII. This chain is DNA polymerase IV, found in Dehalococcoides mccartyi (strain ATCC BAA-2266 / KCTC 15142 / 195) (Dehalococcoides ethenogenes (strain 195)).